The chain runs to 206 residues: Dephospho-CoA kinase (206 aa).

Positions 4 to 204 constitute a DPCK domain; the sequence is IVGLTGGIGS…HQYLQLANAQ (201 aa). Residue 12 to 17 participates in ATP binding; that stretch reads GSGKST.

This sequence belongs to the CoaE family.

It localises to the cytoplasm. The enzyme catalyses 3'-dephospho-CoA + ATP = ADP + CoA + H(+). The protein operates within cofactor biosynthesis; coenzyme A biosynthesis; CoA from (R)-pantothenate: step 5/5. Its function is as follows. Catalyzes the phosphorylation of the 3'-hydroxyl group of dephosphocoenzyme A to form coenzyme A. The polypeptide is Dephospho-CoA kinase (Pasteurella multocida (strain Pm70)).